The chain runs to 447 residues: tRNA modification GTPase MnmE (447 aa).

R24, E81, and K120 together coordinate (6S)-5-formyl-5,6,7,8-tetrahydrofolate. In terms of domain architecture, TrmE-type G spans 216 to 371; the sequence is GLNVVIAGKP…LRKELSDIAG (156 aa). Residue N226 coordinates K(+). GTP-binding positions include 226–231, 245–251, and 270–273; these read NAGKSS, TDIAGTT, and DTAG. S230 contributes to the Mg(2+) binding site. Positions 245, 247, and 250 each coordinate K(+). T251 provides a ligand contact to Mg(2+). A (6S)-5-formyl-5,6,7,8-tetrahydrofolate-binding site is contributed by K447.

Belongs to the TRAFAC class TrmE-Era-EngA-EngB-Septin-like GTPase superfamily. TrmE GTPase family. In terms of assembly, homodimer. Heterotetramer of two MnmE and two MnmG subunits. Requires K(+) as cofactor.

The protein localises to the cytoplasm. Its function is as follows. Exhibits a very high intrinsic GTPase hydrolysis rate. Involved in the addition of a carboxymethylaminomethyl (cmnm) group at the wobble position (U34) of certain tRNAs, forming tRNA-cmnm(5)s(2)U34. The polypeptide is tRNA modification GTPase MnmE (Ruthia magnifica subsp. Calyptogena magnifica).